A 139-amino-acid polypeptide reads, in one-letter code: Toxin FitB (139 aa).

The 122-residue stretch at 2 to 123 (ILLDTNVISE…HSLTVATRDT (122 aa)) folds into the PINc domain. The Mg(2+) site is built by aspartate 5 and aspartate 104.

It belongs to the PINc/VapC protein family. As to quaternary structure, forms a heterodimer with FitA, 4 FitAB heterodimers form a complex that binds to promoter DNA. The complex is also seen in solution. This protein does not actually contact DNA. Mg(2+) serves as cofactor.

Its function is as follows. Toxic component of a type II toxin-antitoxin (TA) system. Plays a role in the speed with which bacteria traverse human epithelial cells; disruption of the locus increases the speed of trafficking about 2-4-fold. FitAB binds to its own promoter better than FitA alone. The expected nuclease activity was not observed for the FitAB complex, perhaps because FitA (the antitoxin) prevents metal binding and thus catalysis by FitB. This is Toxin FitB (fitB) from Neisseria gonorrhoeae (strain ATCC 700825 / FA 1090).